A 387-amino-acid chain; its full sequence is Phosphoglycerate kinase (387 aa).

Residues 21 to 23, Arg-36, and 59 to 62 each bind substrate; these read DLN and HLGR. N6-acetyllysine is present on Lys-84. 2 residues coordinate substrate: Arg-113 and Arg-146. ATP-binding positions include Lys-197, Glu-314, and 340–343; that span reads GGDT.

It belongs to the phosphoglycerate kinase family. In terms of assembly, monomer.

Its subcellular location is the cytoplasm. It carries out the reaction (2R)-3-phosphoglycerate + ATP = (2R)-3-phospho-glyceroyl phosphate + ADP. Its pathway is carbohydrate degradation; glycolysis; pyruvate from D-glyceraldehyde 3-phosphate: step 2/5. This Escherichia coli O9:H4 (strain HS) protein is Phosphoglycerate kinase.